Here is a 383-residue protein sequence, read N- to C-terminus: Opsin Rh3 (383 aa).

Residues 1–57 (MESGNVSSSLFGNVSTALRPEARLSAETRLLGWNVPPEELRHIPEHWLTYPEPPESM) lie on the Extracellular side of the membrane. N-linked (GlcNAc...) asparagine glycosylation is present at Asn-13. The helical transmembrane segment at 58 to 82 (NYLLGTLYIFFTLMSMLGNGLVIWV) threads the bilayer. At 83-94 (FSAAKSLRTPSN) the chain is on the cytoplasmic side. A helical membrane pass occupies residues 95 to 119 (ILVINLAFCDFMMMVKTPIFIYNSF). Residues 120–133 (HQGYALGHLGCQIF) lie on the Extracellular side of the membrane. Cysteines 130 and 207 form a disulfide. Residues 134–153 (GIIGSYTGIAAGATNAFIAY) form a helical membrane-spanning segment. Residues 154-171 (DRFNVITRPMEGKMTHGK) are Cytoplasmic-facing. Residues 172-196 (AIAMIIFIYMYATPWVVACYTETWG) form a helical membrane-spanning segment. At 197–220 (RFVPEGYLTSCTFDYLTDNFDTRL) the chain is on the extracellular side. The chain crosses the membrane as a helical span at residues 221–248 (FVACIFFFSFVCPTTMITYYYSQIVGHV). Topologically, residues 249–284 (FSHEKALRDQAKKMNVESLRSNVDKNKETAEIRIAK) are cytoplasmic. Residues 285–308 (AAITICFLFFCSWTPYGVMSLIGA) traverse the membrane as a helical segment. The Extracellular segment spans residues 309 to 316 (FGDKTLLT). The helical transmembrane segment at 317 to 341 (PGATMIPACACKMVACIDPFVYAIS) threads the bilayer. Lys-328 bears the N6-(retinylidene)lysine mark. The Cytoplasmic segment spans residues 342-383 (HPRYRMELQKRCPWLALNEKAPESSAVASTSTTQEPQQTTAA). The segment at 362–383 (APESSAVASTSTTQEPQQTTAA) is disordered. Residues 369–383 (ASTSTTQEPQQTTAA) are compositionally biased toward low complexity.

The protein belongs to the G-protein coupled receptor 1 family. Opsin subfamily. Post-translationally, phosphorylated on some or all of the serine and threonine residues present in the C-terminal region.

The protein resides in the membrane. Visual pigments are the light-absorbing molecules that mediate vision. They consist of an apoprotein, opsin, covalently linked to cis-retinal. The sequence is that of Opsin Rh3 (Rh3) from Drosophila melanogaster (Fruit fly).